The chain runs to 325 residues: Natural cytotoxicity triggering receptor 1 (325 aa).

The first 16 residues, 1–16 (MLPTLTALLCLGLCLS), serve as a signal peptide directing secretion. At 17 to 255 (QRINTEKETL…SAFWDHTTQN (239 aa)) the chain is on the extracellular side. 2 consecutive Ig-like domains span residues 34–118 (KPSI…LVVT) and 129–211 (YPRP…LLIT). Cys49 and Cys98 form a disulfide bridge. Asn139 is a glycosylation site (N-linked (GlcNAc...) asparagine). Cysteines 144 and 190 form a disulfide. 2 N-linked (GlcNAc...) asparagine glycosylation sites follow: Asn216 and Asn238. Residues 256–273 (LIRIGLACIILITLVWLL) form a helical membrane-spanning segment. Over 274–325 (TEDWLSKRKDHEEANRLTNWECRRRWRMQHYFEEEQRNAISMMELKATPGAL) the chain is Cytoplasmic.

It belongs to the natural cytotoxicity receptor (NCR) family. In terms of assembly, interacts with CD3Z and FCER1G. Selectively expressed by NK cells.

Its subcellular location is the cell membrane. Its function is as follows. Cytotoxicity-activating receptor that may contribute to the increased efficiency of activated natural killer (NK) cells to mediate tumor cell lysis. In Mus musculus (Mouse), this protein is Natural cytotoxicity triggering receptor 1 (Ncr1).